Here is a 171-residue protein sequence, read N- to C-terminus: S-ribosylhomocysteine lyase (171 aa).

Residues His54, His58, and Cys128 each coordinate Fe cation.

The protein belongs to the LuxS family. As to quaternary structure, homodimer. It depends on Fe cation as a cofactor.

The enzyme catalyses S-(5-deoxy-D-ribos-5-yl)-L-homocysteine = (S)-4,5-dihydroxypentane-2,3-dione + L-homocysteine. Functionally, involved in the synthesis of autoinducer 2 (AI-2) which is secreted by bacteria and is used to communicate both the cell density and the metabolic potential of the environment. The regulation of gene expression in response to changes in cell density is called quorum sensing. Catalyzes the transformation of S-ribosylhomocysteine (RHC) to homocysteine (HC) and 4,5-dihydroxy-2,3-pentadione (DPD). This is S-ribosylhomocysteine lyase from Escherichia coli O157:H7.